Consider the following 634-residue polypeptide: TATA box-binding protein-associated factor RNA polymerase I subunit B (634 aa).

An RRN7-type zinc finger spans residues 19–51; sequence LVCEYCGHGSEYAEDDADDGFFTCRQCSAIHTS. Positions 21, 24, 42, and 45 each coordinate Zn(2+). The tract at residues 51–80 is B-reader; sequence STQNTATNPFDFPMTPAHLSAHRRPTQPTP. The interval 54-107 is disordered; the sequence is NTATNPFDFPMTPAHLSAHRRPTQPTPTPKPFPAPRGAATGAAAPDFDDLGEPS. Over residues 77-87 the composition is skewed to pro residues; sequence QPTPTPKPFPA. The tract at residues 81-83 is B-linker; the sequence is TPK. The interval 84–281 is N-terminal cyclin fold; sequence PFPAPRGAAT…DKLLGSSLND (198 aa). Low complexity predominate over residues 88-98; sequence PRGAATGAAAP. Positions 282–284 are C-terminal cyclin fold; it reads CPL.

Belongs to the RRN7/TAF1B family.

The protein resides in the nucleus. Its subcellular location is the nucleolus. In terms of biological role, component of RNA polymerase I core factor complex that acts as a GTF2B/TFIIB-like factor and plays a key role in multiple steps during transcription initiation such as pre-initiation complex (PIC) assembly and postpolymerase recruitment events in polymerase I (Pol I) transcription. Binds rDNA promoters and plays a role in Pol I recruitment. This chain is TATA box-binding protein-associated factor RNA polymerase I subunit B, found in Oryza sativa subsp. japonica (Rice).